A 140-amino-acid polypeptide reads, in one-letter code: Protein ApaG (140 aa).

The ApaG domain occupies 13–137; it reads EARTRDIVVR…FSLHLPGAAM (125 aa).

The sequence is that of Protein ApaG from Caulobacter vibrioides (strain ATCC 19089 / CIP 103742 / CB 15) (Caulobacter crescentus).